The sequence spans 152 residues: Superoxide dismutase [Cu-Zn] (152 aa).

Cu cation contacts are provided by His-45, His-47, and His-62. Cys-56 and Cys-145 are disulfide-bonded. Zn(2+) is bound by residues His-62, His-70, His-79, and Asp-82. Position 119 (His-119) interacts with Cu cation.

It belongs to the Cu-Zn superoxide dismutase family. As to quaternary structure, homodimer. The cofactor is Cu cation. Zn(2+) serves as cofactor.

The protein resides in the cytoplasm. The catalysed reaction is 2 superoxide + 2 H(+) = H2O2 + O2. Its function is as follows. Destroys radicals which are normally produced within the cells and which are toxic to biological systems. The protein is Superoxide dismutase [Cu-Zn] (SODCC) of Carica papaya (Papaya).